The following is a 220-amino-acid chain: MASATDARYGQKESSDQNFDYMFKILIIGNSSVGKTSFLFRYADDSFTPAFVSTVGIDFKVKTIYRNDKRIKLQIWDTAGQERYRTITTAYYRGAMGFILMYDITNEESFNAVQDWSTQIKTYSWDNAQVLLVGNKCDMEDERVVSSERGRQLADHLGFEFFEASAKDNINVKQTFERLVDVICEKMSESLDTADPAVTGAKQGPQLTDQQAPPHQDCAC.

GTP is bound by residues Ser-31, Ser-32, Val-33, Gly-34, Lys-35, Thr-36, Ser-37, Thr-48, Pro-49, Ser-53, and Thr-54. Position 36 (Thr-36) interacts with Mg(2+). The Switch 1 signature appears at Pro-49 to Asp-58. Thr-54 and Asp-77 together coordinate Mg(2+). A GTP-binding site is contributed by Gly-80. Residues Gly-80 to Met-96 carry the Switch 2 motif. Thr-86 bears the Phosphothreonine mark. GTP-binding residues include Asn-135, Lys-136, Asp-138, Ala-166, and Lys-167. 2 positions are modified to phosphoserine: Ser-188 and Ser-190. The tract at residues Ala-194 to Cys-220 is disordered. S-geranylgeranyl cysteine attachment occurs at residues Cys-218 and Cys-220. A Cysteine methyl ester modification is found at Cys-220.

Belongs to the small GTPase superfamily. Rab family. In terms of assembly, interacts with RIMS1 and RIMS2. Interacts with Rabphilin-3A/RPH3A and Rab effector Noc2/RPH3AL. Interacts with SYTL4. Interacts with RAB3IP. Interacts with SGSM1 and SGSM3. Interacts with SYT1. Interacts with MYH9; this interaction is essential for lysosome exocytosis and plasma membrane repair. Interacts with STXBP1; this interaction promotes RAB3A dissociation from the vesicle membrane. Interacts with SNCA. Interacts with GDI1, GDI2, CHM and CHML; phosphorylation at Thr-86 disrupts these interactions. Interacts with MADD (via uDENN domain); the GTP-bound form is preferred for interaction. The cofactor is Mg(2+). In terms of processing, phosphorylation of Thr-86 in the switch II region by LRRK2 prevents the association of RAB regulatory proteins, including CHM, CHML and RAB GDP dissociation inhibitors GDI1 and GDI2. In terms of tissue distribution, specifically expressed in brain.

The protein localises to the cytoplasm. Its subcellular location is the cytosol. It is found in the lysosome. It localises to the cytoplasmic vesicle. The protein resides in the secretory vesicle. The protein localises to the cell projection. Its subcellular location is the axon. It is found in the cell membrane. It localises to the presynapse. The protein resides in the postsynapse. It carries out the reaction GTP + H2O = GDP + phosphate + H(+). Its activity is regulated as follows. Regulated by guanine nucleotide exchange factors (GEFs) including RAB3IL1 and MADD which promote the exchange of bound GDP for free GTP. Regulated by GTPase activating proteins (GAPs) including RAB3GAP1 and TBC1D10B which increase the GTP hydrolysis activity. Inhibited by GDP dissociation inhibitors (GDIs) which prevent Rab-GDP dissociation. Its function is as follows. The small GTPases Rab are key regulators of intracellular membrane trafficking, from the formation of transport vesicles to their fusion with membranes. Rabs cycle between an inactive GDP-bound form and an active GTP-bound form that is able to recruit to membranes different sets of downstream effectors directly responsible for vesicle formation, movement, tethering and fusion. RAB3A plays a central role in regulated exocytosis and secretion. Controls the recruitment, tethering and docking of secretory vesicles to the plasma membrane. Upon stimulation, switches to its active GTP-bound form, cycles to vesicles and recruits effectors such as RIMS1, RIMS2, Rabphilin-3A/RPH3A, RPH3AL or SYTL4 to help the docking of vesicules onto the plasma membrane. Upon GTP hydrolysis by GTPase-activating protein, dissociates from the vesicle membrane allowing the exocytosis to proceed. Stimulates insulin secretion through interaction with RIMS2 or RPH3AL effectors in pancreatic beta cells. Regulates calcium-dependent lysosome exocytosis and plasma membrane repair (PMR) via the interaction with 2 effectors, SYTL4 and myosin-9/MYH9. Acts as a positive regulator of acrosome content secretion in sperm cells by interacting with RIMS1. Also plays a role in the regulation of dopamine release by interacting with synaptotagmin I/SYT. In Bos taurus (Bovine), this protein is Ras-related protein Rab-3A (RAB3A).